The sequence spans 244 residues: MLINFTQVLQDSWNFFRNQKKIMLQFVAILFIVQSASALLSFSVNDENKNDVLNLANTDITSFIFSVAITQILTSFIAAWGLTSIHKISLQNYRTLGETFSLTLRRFAGVILLDLLMVAPMLLGLGEAFAALLTKKSPSIMSLIAMLVGVWFFVRLNLTVVHYLSTQEALSQTIRKIWMRGNTRKGVLFIYTLLVYFLVPILIFQLSAFSNNAVFDMVIGIFTALLNIFMLVVTYRFYSLFMKD.

Helical transmembrane passes span 22–42 (IMLQ…LLSF), 63–83 (FIFS…WGLT), 110–130 (VILL…EAFA), 140–160 (IMSL…NLTV), 186–206 (GVLF…IFQL), and 213–233 (AVFD…MLVV).

It localises to the cell membrane. This is an uncharacterized protein from Haemophilus influenzae (strain ATCC 51907 / DSM 11121 / KW20 / Rd).